An 85-amino-acid polypeptide reads, in one-letter code: Turmerin (85 aa).

Post-translationally, the N-terminus is blocked.

Its function is as follows. Inhibition of trypsin. Has anticarcinogenic activity, prevents transformation of DMBA-treated JB6 cells. Has antipromoter activity, prevents promotion by tetradecanoyl phorbal acetate (TPA) in JB6 cells. Prevents tertiary butyl hydroperoxide-induced mutagenesis. Protects AT base pairs and shows antimutagenesis activity in TA102 and TA104 S.typhimurium mutagenesis tests. Inhibits paw edema formation induced by phospholipase A2 in Swiss Wistar mice. Prevents the release of arachidonate, the parent compound for the synthesis of prostaglandins and prostacyclins. Has antimalarial activity, kills P.falciparum. Has antivenom activity, nullifies the lethal effects of N.naja venom and inhibits phospholipase A2 present in N.naja venom. Has antifungal activity, inhibits cilia formation by A.niger. Is not toxic or allergenic. This chain is Turmerin, found in Curcuma longa (Turmeric).